A 1781-amino-acid chain; its full sequence is Atrochrysone carboxylic acid synthase (1781 aa).

Positions 15–253 (TRDLFRRLHV…KHVALPVYAG (239 aa)) are N-terminal acylcarrier protein transacylase domain (SAT). A Ketosynthase family 3 (KS3) domain is found at 390–823 (QSKIAIVGMA…GGNTSVVVEE (434 aa)). Catalysis depends on for beta-ketoacyl synthase activity residues Cys-563, His-698, and His-741. The interval 925–1244 (FAFTGQGASH…SLGLLHCAGL (320 aa)) is malonyl-CoA:ACP transacylase (MAT) domain. Residues 1312 to 1631 (TSTVQQIIEE…RVLLNRFFSA (320 aa)) form a product template (PT) domain region. Positions 1316 to 1451 (QQIIEETFSD…ADIVYGLPTD (136 aa)) are N-terminal hotdog fold. The 311-residue stretch at 1316–1626 (QQIIEETFSD…FRRYPRVLLN (311 aa)) folds into the PKS/mFAS DH domain. Residue His-1348 is the Proton acceptor; for dehydratase activity of the active site. The segment at 1478 to 1626 (IANRLSHNMA…FRRYPRVLLN (149 aa)) is C-terminal hotdog fold. The active-site Proton donor; for dehydratase activity is the Asp-1537. The segment at 1633–1653 (DSDTSKHTSATDVSPPKKVVQ) is disordered. Positions 1703–1780 (VDSDSTASKA…DLKAWLMEYY (78 aa)) constitute a Carrier domain. An O-(pantetheine 4'-phosphoryl)serine modification is found at Ser-1740.

The enzyme catalyses holo-[ACP] + 8 malonyl-CoA + 8 H(+) = atrochrysone carboxyl-[ACP] + 8 CO2 + 8 CoA + 2 H2O. It functions in the pathway secondary metabolite biosynthesis. In terms of biological role, atrochrysone carboxylic acid synthase; part of the gene cluster that mediates the biosynthesis of the dimeric xanthones cryptosporioptides. The pathway begins with the synthesis of atrochrysone thioester by the polyketide synthase dmx-nrPKS. The atrochrysone carboxyl ACP thioesterase dmxR1 then breaks the thioester bond and releases the atrochrysone carboxylic acid from dmx-nrPKS. Atrochrysone carboxylic acid is decarboxylated by the decarboxylase dmxR15, and oxidized by the anthrone oxygenase dmxR16 to yield emodin. Emodin is then reduced to emodin hydroquinone by the oxidoreductase dmxR7. A-ring reduction by the short chain dehydrogenase dmxR18, dehydration by the scytalone dehydratase-like protein dmxR17 and probable spontaneous re-oxidation, results in overall deoxygenation to chrysophanol. Baeyer-Villiger oxidation by the Baeyer-Villiger monooxygenase (BVMO) dmxR6 then yields monodictylactone in equilibrium with monodictyphenone. In the case of the cryptosporioptides biosynthesis, monodictylactone is reduced at C-12 to an alcohol (by the short chain dehydrogenases dmxR12 or dmxR8) and hydroxylated at C-5 by dmxR9, yielding the electron-rich aromatic which could eliminate H(2)O to form the ortho-quinonemethide, followed by tautomerisation to paraquinone and complete the formal reduction to produce the 10-methylgroup. Conjugate addition of C-4a-OH to the resulting paraquinone by the monooxygenase dmxR10 then gives cyclohexadienone, which is then reduced at C-5 by the short chain dehydrogenase dmxR3 to give the dihydroxanthone. The 6,7-epoxide in the cryptosporioptides could be introduced by the cytochrome P450 monooxygenase dmxL3. The highly reducing PKS dmxL2 manufactures butyrate, which is further carboxylated by dmxL1 to form ethylmalonate. It is not yet clear whether the carboxylation occurs while the butyrate is attached to the ACP of dmxL2, but this unusual fungal metabolite could then be esterified to O-5 by the O-acetyltransferase dmxR13. Finally, dimerization performed by dmxR5 gives the observed dimers cryptosporioptides A, B and C as the final products of the pathway. In Cryptosporiopsis sp. (strain 8999), this protein is Atrochrysone carboxylic acid synthase.